We begin with the raw amino-acid sequence, 1125 residues long: Tip elongation aberrant protein 3 (1125 aa).

Kelch repeat units lie at residues Phe73–Asp123, Thr124–Ser179, Leu181–Met226, Lys259–Asp308, and Val310–Asn360. 10 positions are modified to phosphoserine: Ser430, Ser437, Ser460, Ser523, Ser980, Ser982, Ser983, Ser984, Ser1078, and Ser1080. A disordered region spans residues Pro507–Ser530. Residues Ile515–Ser530 show a composition bias toward low complexity.

The protein resides in the cell tip. In terms of biological role, acts as a cell end marker required for efficient new end take-off (NETO), whereby growth is activated at the cell end to generate bipolarity in extending cells. Also required for proper placement of the septum. The chain is Tip elongation aberrant protein 3 (tea3) from Schizosaccharomyces pombe (strain 972 / ATCC 24843) (Fission yeast).